Reading from the N-terminus, the 162-residue chain is 2-C-methyl-D-erythritol 2,4-cyclodiphosphate synthase (162 aa).

2 residues coordinate a divalent metal cation: Asp-8 and His-10. Residues 8-10 (DVH) and 36-37 (HS) contribute to the 4-CDP-2-C-methyl-D-erythritol 2-phosphate site. His-44 provides a ligand contact to a divalent metal cation. 4-CDP-2-C-methyl-D-erythritol 2-phosphate-binding positions include 58–60 (DIG), 63–67 (FPDTD), 102–108 (AQAPKMA), 134–137 (TTTE), Phe-141, and Arg-144.

Belongs to the IspF family. As to quaternary structure, homotrimer. The cofactor is a divalent metal cation.

The enzyme catalyses 4-CDP-2-C-methyl-D-erythritol 2-phosphate = 2-C-methyl-D-erythritol 2,4-cyclic diphosphate + CMP. Its pathway is isoprenoid biosynthesis; isopentenyl diphosphate biosynthesis via DXP pathway; isopentenyl diphosphate from 1-deoxy-D-xylulose 5-phosphate: step 4/6. In terms of biological role, involved in the biosynthesis of isopentenyl diphosphate (IPP) and dimethylallyl diphosphate (DMAPP), two major building blocks of isoprenoid compounds. Catalyzes the conversion of 4-diphosphocytidyl-2-C-methyl-D-erythritol 2-phosphate (CDP-ME2P) to 2-C-methyl-D-erythritol 2,4-cyclodiphosphate (ME-CPP) with a corresponding release of cytidine 5-monophosphate (CMP). The polypeptide is 2-C-methyl-D-erythritol 2,4-cyclodiphosphate synthase (Yersinia pseudotuberculosis serotype O:1b (strain IP 31758)).